The sequence spans 163 residues: Small ribosomal subunit protein uS7 (163 aa).

Belongs to the universal ribosomal protein uS7 family. As to quaternary structure, part of the 30S ribosomal subunit. Contacts proteins S9 and S11.

Functionally, one of the primary rRNA binding proteins, it binds directly to 16S rRNA where it nucleates assembly of the head domain of the 30S subunit. Is located at the subunit interface close to the decoding center, probably blocks exit of the E-site tRNA. The protein is Small ribosomal subunit protein uS7 of Rickettsia bellii (strain RML369-C).